Here is a 617-residue protein sequence, read N- to C-terminus: 1-deoxy-D-xylulose-5-phosphate synthase (617 aa).

Thiamine diphosphate-binding positions include histidine 80 and 121 to 123 (GHS). Aspartate 152 serves as a coordination point for Mg(2+). Residues 153 to 154 (GA), asparagine 181, tyrosine 277, and glutamate 360 contribute to the thiamine diphosphate site. Asparagine 181 serves as a coordination point for Mg(2+).

This sequence belongs to the transketolase family. DXPS subfamily. Homodimer. Requires Mg(2+) as cofactor. Thiamine diphosphate serves as cofactor.

The enzyme catalyses D-glyceraldehyde 3-phosphate + pyruvate + H(+) = 1-deoxy-D-xylulose 5-phosphate + CO2. It functions in the pathway metabolic intermediate biosynthesis; 1-deoxy-D-xylulose 5-phosphate biosynthesis; 1-deoxy-D-xylulose 5-phosphate from D-glyceraldehyde 3-phosphate and pyruvate: step 1/1. In terms of biological role, catalyzes the acyloin condensation reaction between C atoms 2 and 3 of pyruvate and glyceraldehyde 3-phosphate to yield 1-deoxy-D-xylulose-5-phosphate (DXP). The polypeptide is 1-deoxy-D-xylulose-5-phosphate synthase (Blochmanniella floridana).